A 441-amino-acid chain; its full sequence is Ribosomal protein uS12 methylthiotransferase RimO (441 aa).

The 111-residue stretch at 8-118 folds into the MTTase N-terminal domain; it reads PKIGFVSLGC…VLEHVHHYVP (111 aa). [4Fe-4S] cluster is bound by residues Cys-17, Cys-53, Cys-82, Cys-150, Cys-154, and Cys-157. The 238-residue stretch at 136-373 folds into the Radical SAM core domain; sequence LTPRHYAYLK…MQLQQQISAE (238 aa). Residues 376–441 form the TRAM domain; that stretch reads QEKVGREILV…DEYDLWGSRV (66 aa).

The protein belongs to the methylthiotransferase family. RimO subfamily. It depends on [4Fe-4S] cluster as a cofactor.

The protein localises to the cytoplasm. It catalyses the reaction L-aspartate(89)-[ribosomal protein uS12]-hydrogen + (sulfur carrier)-SH + AH2 + 2 S-adenosyl-L-methionine = 3-methylsulfanyl-L-aspartate(89)-[ribosomal protein uS12]-hydrogen + (sulfur carrier)-H + 5'-deoxyadenosine + L-methionine + A + S-adenosyl-L-homocysteine + 2 H(+). In terms of biological role, catalyzes the methylthiolation of an aspartic acid residue of ribosomal protein uS12. This is Ribosomal protein uS12 methylthiotransferase RimO from Shigella boydii serotype 18 (strain CDC 3083-94 / BS512).